Here is a 69-residue protein sequence, read N- to C-terminus: Omega-oxotoxin-Ol1a (69 aa).

Positions 1–68 (DWECLPLHSS…GKINTCDKYK (68 aa)) constitute an Oxytoxin-type inhibitor cystine knot (ICK) domain. 5 disulfides stabilise this stretch: C4–C18, C11–C23, C15–C64, C17–C52, and C25–C50. The residue at position 69 (N69) is an Asparagine amide.

The protein belongs to the spiderine family. Spiderine subfamily. In terms of tissue distribution, expressed by the venom gland.

The protein localises to the secreted. Functionally, weak blocker of vertebrate P/Q-, N- and L-type voltage-gated calcium channels (Cav1 and Cav2). Is both paralytic and lethal when injected into lepidopteran larvae. Is not toxic to mice. This Oxyopes lineatus (Lynx spider) protein is Omega-oxotoxin-Ol1a.